The following is a 369-amino-acid chain: Hsc70-interacting protein (369 aa).

The tract at residues 38–97 is disordered; sequence MGGKVPPATQKAKSEENTKEEKPDSKKVEEDLKADEPSSEESDLEIDKEGVIEPDTDAPQ. Residues 49–73 are compositionally biased toward basic and acidic residues; sequence AKSEENTKEEKPDSKKVEEDLKADE. TPR repeat units follow at residues 114–147, 148–181, and 182–215; these read ANDK…NPRL, AILY…NPDS, and AQPY…DYDE. The segment covering 256 to 272 has biased composition (basic and acidic residues); the sequence is KAREEHERAQREEEARR. Residues 256 to 300 are disordered; sequence KAREEHERAQREEEARRQSGAQYGSFPGGFPGGMPGNFPGGMPGM. Positions 281–300 are enriched in gly residues; sequence FPGGFPGGMPGNFPGGMPGM. The STI1 domain maps to 319–358; the sequence is DPEVLAAMQDPEVMVAFQDVAQNPANMSKYQSNPKVMNLI. Position 346 is a phosphoserine; by GRK5 (serine 346). N6-acetyllysine occurs at positions 353 and 360.

The protein belongs to the FAM10 family. As to quaternary structure, homotetramer. Interacts with HSC70 as well as DNAJ homologs and HSP90. Interacts (via the C-terminus 303- 319 AA) with GRK5.

The protein localises to the cytoplasm. Its function is as follows. One HIP oligomer binds the ATPase domains of at least two HSC70 molecules dependent on activation of the HSC70 ATPase by HSP40. Stabilizes the ADP state of HSC70 that has a high affinity for substrate protein. Through its own chaperone activity, it may contribute to the interaction of HSC70 with various target proteins. The polypeptide is Hsc70-interacting protein (ST13) (Homo sapiens (Human)).